The following is a 261-amino-acid chain: Carnitinyl-CoA dehydratase (261 aa).

Glu111 serves as the catalytic Nucleophile. Glu131 serves as the catalytic Proton acceptor.

It belongs to the enoyl-CoA hydratase/isomerase family.

It catalyses the reaction (R)-carnitinyl-CoA = crotonobetainyl-CoA + H2O. Its pathway is amine and polyamine metabolism; carnitine metabolism. Its function is as follows. Catalyzes the reversible dehydration of L-carnitinyl-CoA to crotonobetainyl-CoA. The chain is Carnitinyl-CoA dehydratase from Salmonella arizonae (strain ATCC BAA-731 / CDC346-86 / RSK2980).